We begin with the raw amino-acid sequence, 350 residues long: Dihydroorotase (350 aa).

Positions 17 and 19 each coordinate Zn(2+). Residues 19 to 21 (HLR) and Asn45 contribute to the substrate site. Zn(2+)-binding residues include Lys103, His140, and His178. An N6-carboxylysine modification is found at Lys103. Residue His140 coordinates substrate. Leu224 is a binding site for substrate. Asp252 contributes to the Zn(2+) binding site. Residue Asp252 is part of the active site. Substrate-binding residues include His256 and Ala268.

It belongs to the metallo-dependent hydrolases superfamily. DHOase family. Class II DHOase subfamily. In terms of assembly, homodimer. Zn(2+) serves as cofactor.

The catalysed reaction is (S)-dihydroorotate + H2O = N-carbamoyl-L-aspartate + H(+). It functions in the pathway pyrimidine metabolism; UMP biosynthesis via de novo pathway; (S)-dihydroorotate from bicarbonate: step 3/3. Its function is as follows. Catalyzes the reversible cyclization of carbamoyl aspartate to dihydroorotate. This is Dihydroorotase from Buchnera aphidicola subsp. Acyrthosiphon pisum (strain APS) (Acyrthosiphon pisum symbiotic bacterium).